The chain runs to 244 residues: U11/U12 small nuclear ribonucleoprotein 35 kDa protein (244 aa).

Positions 51–129 constitute an RRM domain; that stretch reads LTLFVARLNS…HEIFVDYELE (79 aa). Residues 146-162 are compositionally biased toward basic and acidic residues; sequence GKKESGQLRFGGRDRPF. The tract at residues 146 to 244 is disordered; sequence GKKESGQLRF…KTRDKRDRSK (99 aa). Residue lysine 172 forms a Glycyl lysine isopeptide (Lys-Gly) (interchain with G-Cter in SUMO2) linkage. 2 stretches are compositionally biased toward basic and acidic residues: residues 173-185 and 192-244; these read NEPHREGKRERRE and RHWD…DRSK.

As to quaternary structure, component of the U11/U12 snRNPs that are part of the U12-type spliceosome.

The protein localises to the nucleus. The polypeptide is U11/U12 small nuclear ribonucleoprotein 35 kDa protein (Snrnp35) (Rattus norvegicus (Rat)).